A 305-amino-acid polypeptide reads, in one-letter code: Oxygen-dependent coproporphyrinogen-III oxidase (305 aa).

Ser98 provides a ligand contact to substrate. A divalent metal cation is bound by residues His102 and His112. His112 acts as the Proton donor in catalysis. 114–116 (NVR) is a substrate binding site. Residues His151 and His181 each contribute to the a divalent metal cation site. The segment at 246-281 (YVEFNLVYDRGTLFGLQSGGRTESILMSMPPLARWE) is important for dimerization. 264–266 (GGR) is a substrate binding site.

The protein belongs to the aerobic coproporphyrinogen-III oxidase family. In terms of assembly, homodimer. Requires a divalent metal cation as cofactor.

The protein resides in the cytoplasm. It catalyses the reaction coproporphyrinogen III + O2 + 2 H(+) = protoporphyrinogen IX + 2 CO2 + 2 H2O. It functions in the pathway porphyrin-containing compound metabolism; protoporphyrin-IX biosynthesis; protoporphyrinogen-IX from coproporphyrinogen-III (O2 route): step 1/1. In terms of biological role, involved in the heme biosynthesis. Catalyzes the aerobic oxidative decarboxylation of propionate groups of rings A and B of coproporphyrinogen-III to yield the vinyl groups in protoporphyrinogen-IX. This is Oxygen-dependent coproporphyrinogen-III oxidase from Vibrio parahaemolyticus serotype O3:K6 (strain RIMD 2210633).